The primary structure comprises 617 residues: Dopamine beta-hydroxylase (617 aa).

The Cytoplasmic portion of the chain corresponds to 1–16 (MPALSRWASLPGPSMR). A helical; Signal-anchor for type II membrane protein membrane pass occupies residues 17-37 (EAAFMYSTAVAIFLVILVAAL). Residues 38-617 (QGSAPRESPL…TVVSIGGGKG (580 aa)) lie on the Intragranular side of the membrane. In terms of domain architecture, DOMON spans 57–173 (GSLELSWNVS…GTVHLVYGIL (117 aa)). A glycan (N-linked (GlcNAc...) asparagine) is linked at N64. Intrachain disulfides connect C154/C596, C232/C283, C269/C295, C390/C503, C394/C565, and C466/C488. N-linked (GlcNAc...) (complex) asparagine glycosylation occurs at N184. The active site involves Y230. H262 and H263 together coordinate Cu(2+). H333 serves as a coordination point for Cu(2+). N-linked (GlcNAc...) asparagine glycosylation occurs at N344. The active site involves H412. Residues H412, H414, and M487 each contribute to the Cu(2+) site. N566 is a glycosylation site (N-linked (GlcNAc...) asparagine). The disordered stretch occupies residues 590–617 (EEPTPQCPTSQGRSPAGPTVVSIGGGKG).

It belongs to the copper type II ascorbate-dependent monooxygenase family. In terms of assembly, homotetramer; composed of two disulfide-linked dimers. Cu(2+) is required as a cofactor. In terms of processing, N-glycosylated. Post-translationally, proteolytic cleavage after the membrane-anchor leads to the release of the soluble form.

Its subcellular location is the cytoplasmic vesicle. It localises to the secretory vesicle lumen. The protein localises to the secretory vesicle. It is found in the chromaffin granule lumen. The protein resides in the secreted. Its subcellular location is the secretory vesicle membrane. It localises to the chromaffin granule membrane. The catalysed reaction is dopamine + 2 L-ascorbate + O2 = (R)-noradrenaline + 2 monodehydro-L-ascorbate radical + H2O. The protein operates within catecholamine biosynthesis; (R)-noradrenaline biosynthesis; (R)-noradrenaline from dopamine: step 1/1. Its function is as follows. Catalyzes the hydroxylation of dopamine to noradrenaline (also known as norepinephrine), and is thus vital for regulation of these neurotransmitters. The polypeptide is Dopamine beta-hydroxylase (DBH) (Homo sapiens (Human)).